A 218-amino-acid polypeptide reads, in one-letter code: Molybdenum cofactor guanylyltransferase (218 aa).

GTP is bound by residues 16–18 (LAG), Lys28, Asn56, Asp74, and Asp109. Residue Asp109 coordinates Mg(2+).

It belongs to the MobA family. As to quaternary structure, monomer. Mg(2+) is required as a cofactor.

The protein localises to the cytoplasm. It carries out the reaction Mo-molybdopterin + GTP + H(+) = Mo-molybdopterin guanine dinucleotide + diphosphate. In terms of biological role, transfers a GMP moiety from GTP to Mo-molybdopterin (Mo-MPT) cofactor (Moco or molybdenum cofactor) to form Mo-molybdopterin guanine dinucleotide (Mo-MGD) cofactor. The protein is Molybdenum cofactor guanylyltransferase of Sinorhizobium fredii (strain NBRC 101917 / NGR234).